We begin with the raw amino-acid sequence, 330 residues long: Low-redox potential peroxidase (330 aa).

The signal sequence occupies residues methionine 1–alanine 24. Residue asparagine 27 is glycosylated (N-linked (GlcNAc...) asparagine). Cystine bridges form between cysteine 34–cysteine 285, cysteine 54–cysteine 123, and cysteine 251–cysteine 314. 3 residues coordinate Ca(2+): glycine 69, aspartate 71, and serine 73. Histidine 178 contacts heme b. Residues serine 179, aspartate 196, threonine 198, and aspartate 203 each contribute to the Ca(2+) site.

This sequence belongs to the peroxidase family. Ligninase subfamily. It depends on Ca(2+) as a cofactor. Requires heme b as cofactor.

It localises to the secreted. It catalyses the reaction 2 a phenolic donor + H2O2 = 2 a phenolic radical donor + 2 H2O. Its function is as follows. Can oxidize the lignin redox mediator veratryl alcohol to veratryl aldehyde. May be involved in oxidation of lignocellulose substrates. The polypeptide is Low-redox potential peroxidase (LnP) (Taiwanofungus camphoratus (Poroid brown-rot fungus)).